The sequence spans 448 residues: MANVVENLGKLERRVTISLPKDTVQKEIDARIQKLAKNVRMPGFRPGKVPLKMVAQQYAGQVEAEVLSDKIGQEFFTISRAENLRVAGQPSFEPKQEQAEDAYAFDATFEVYPEVKIGDLATAEVERSTTSIGDAEIDRTLDILRKQRVHYHARGEAGEHGDGGADTAAKNGDRVTVDFVGKIDDVAFQGGTAEDFPFVLGEGRMLPEFETAALGLKVGEARTFDLKFPDDYHGKDVAGKTAQFTVTMKKIEWPHMPEIDAEFAKSLGIEDGDLTKMRAEIKENLEREAKRRTQSIVKNQVMDALLKISELDVPKALIEQDQQRLVEMARQDLAQRGVPNAKDAPIPAEMFAEQAERRVKLGLVLAELVKANGLEAKPEQIRAEVDEFAKSYEDPKEVVRWYYSNQQRLAEMEAFVVESNVVEFVLGKAKVTDKEVSFEALASASAQA.

The PPIase FKBP-type domain maps to 172–257 (GDRVTVDFVG…MKKIEWPHMP (86 aa)).

The protein belongs to the FKBP-type PPIase family. Tig subfamily.

It localises to the cytoplasm. The catalysed reaction is [protein]-peptidylproline (omega=180) = [protein]-peptidylproline (omega=0). In terms of biological role, involved in protein export. Acts as a chaperone by maintaining the newly synthesized protein in an open conformation. Functions as a peptidyl-prolyl cis-trans isomerase. This Burkholderia vietnamiensis (strain G4 / LMG 22486) (Burkholderia cepacia (strain R1808)) protein is Trigger factor.